The chain runs to 379 residues: Alcohol dehydrogenase 1 (379 aa).

Residues C47, T49, H69, C99, C102, C105, C113, and C177 each contribute to the Zn(2+) site. Positions 49 and 69 each coordinate an alcohol. T49 is an NAD(+) binding site. NAD(+) is bound by residues 202 to 207, D226, R231, T272, V295, 295 to 297, F322, and R372; these read GLGAVG and VGV.

The protein belongs to the zinc-containing alcohol dehydrogenase family. As to quaternary structure, homodimer. Zn(2+) serves as cofactor.

It is found in the cytoplasm. The catalysed reaction is a primary alcohol + NAD(+) = an aldehyde + NADH + H(+). It carries out the reaction a secondary alcohol + NAD(+) = a ketone + NADH + H(+). This is Alcohol dehydrogenase 1 (ADH1) from Zea mays (Maize).